The following is a 440-amino-acid chain: tRNA-2-methylthio-N(6)-dimethylallyladenosine synthase (440 aa).

The region spanning 7-123 (NTFYIHTFGC…LPQLIEQARS (117 aa)) is the MTTase N-terminal domain. [4Fe-4S] cluster-binding residues include Cys-16, Cys-52, Cys-86, Cys-159, Cys-163, and Cys-166. Residues 145 to 375 (RQGSISAFVP…IDLQNTISGE (231 aa)) form the Radical SAM core domain. The 63-residue stretch at 378 to 440 (QQAIGSVVEV…TSATLTGRPV (63 aa)) folds into the TRAM domain.

Belongs to the methylthiotransferase family. MiaB subfamily. In terms of assembly, monomer. [4Fe-4S] cluster serves as cofactor.

The protein localises to the cytoplasm. The enzyme catalyses N(6)-dimethylallyladenosine(37) in tRNA + (sulfur carrier)-SH + AH2 + 2 S-adenosyl-L-methionine = 2-methylsulfanyl-N(6)-dimethylallyladenosine(37) in tRNA + (sulfur carrier)-H + 5'-deoxyadenosine + L-methionine + A + S-adenosyl-L-homocysteine + 2 H(+). Catalyzes the methylthiolation of N6-(dimethylallyl)adenosine (i(6)A), leading to the formation of 2-methylthio-N6-(dimethylallyl)adenosine (ms(2)i(6)A) at position 37 in tRNAs that read codons beginning with uridine. The polypeptide is tRNA-2-methylthio-N(6)-dimethylallyladenosine synthase (Pelodictyon phaeoclathratiforme (strain DSM 5477 / BU-1)).